The sequence spans 445 residues: Ribosomal protein uS12 methylthiotransferase RimO (445 aa).

Residues 6–121 (KKVAVVTLGC…ILETLEEAEK (116 aa)) enclose the MTTase N-terminal domain. [4Fe-4S] cluster is bound by residues C15, C50, C84, C159, C163, and C166. The Radical SAM core domain maps to 145 to 375 (LSPKQYAYVK…MELQHDIAYE (231 aa)). In terms of domain architecture, TRAM spans 378 to 445 (QRWVGQTLKV…SYDLMGEVVQ (68 aa)).

The protein belongs to the methylthiotransferase family. RimO subfamily. It depends on [4Fe-4S] cluster as a cofactor.

The protein resides in the cytoplasm. The catalysed reaction is L-aspartate(89)-[ribosomal protein uS12]-hydrogen + (sulfur carrier)-SH + AH2 + 2 S-adenosyl-L-methionine = 3-methylsulfanyl-L-aspartate(89)-[ribosomal protein uS12]-hydrogen + (sulfur carrier)-H + 5'-deoxyadenosine + L-methionine + A + S-adenosyl-L-homocysteine + 2 H(+). Catalyzes the methylthiolation of an aspartic acid residue of ribosomal protein uS12. The protein is Ribosomal protein uS12 methylthiotransferase RimO of Desulfitobacterium hafniense (strain Y51).